Reading from the N-terminus, the 202-residue chain is Urease accessory protein UreG (202 aa).

11–18 (GPVGSGKT) serves as a coordination point for GTP.

The protein belongs to the SIMIBI class G3E GTPase family. UreG subfamily. As to quaternary structure, homodimer. UreD, UreF and UreG form a complex that acts as a GTP-hydrolysis-dependent molecular chaperone, activating the urease apoprotein by helping to assemble the nickel containing metallocenter of UreC. The UreE protein probably delivers the nickel.

It is found in the cytoplasm. Functionally, facilitates the functional incorporation of the urease nickel metallocenter. This process requires GTP hydrolysis, probably effectuated by UreG. The protein is Urease accessory protein UreG of Prochlorococcus marinus (strain MIT 9313).